The primary structure comprises 141 residues: Hemoglobin subunit alpha (141 aa).

Positions 1–141 (VLSPADKTNV…VSTVLTSKYR (141 aa)) constitute a Globin domain. Residue Ser3 is modified to Phosphoserine. Lys7 bears the N6-succinyllysine mark. At Thr8 the chain carries Phosphothreonine. Residue Lys11 is modified to N6-succinyllysine. Lys16 bears the N6-acetyllysine; alternate mark. Residue Lys16 is modified to N6-succinyllysine; alternate. Tyr24 is subject to Phosphotyrosine. Ser35 bears the Phosphoserine mark. N6-succinyllysine is present on Lys40. Position 49 is a phosphoserine (Ser49). His58 is a binding site for O2. Residue His87 participates in heme b binding. Ser102 carries the phosphoserine modification. Thr108 is subject to Phosphothreonine. Ser124 and Ser131 each carry phosphoserine. Phosphothreonine occurs at positions 134 and 137. Ser138 carries the phosphoserine modification.

It belongs to the globin family. As to quaternary structure, heterotetramer of two alpha chains and two beta chains. As to expression, red blood cells.

Its function is as follows. Involved in oxygen transport from the lung to the various peripheral tissues. Functionally, hemopressin acts as an antagonist peptide of the cannabinoid receptor CNR1. Hemopressin-binding efficiently blocks cannabinoid receptor CNR1 and subsequent signaling. In Cebus capucinus (White-faced sapajou), this protein is Hemoglobin subunit alpha (HBA).